Reading from the N-terminus, the 498-residue chain is Protein flp (498 aa).

The next 4 membrane-spanning stretches (helical) occupy residues 6–26 (LYFL…IYIT), 389–409 (FNIV…FSAY), 433–453 (LTLC…YLIL), and 471–491 (LALI…LLFL).

It is found in the cell membrane. In terms of biological role, its precise function is unknown. Has no penicillin-binding activity and is not involved in methicillin resistance. The protein is Protein flp (flp) of Staphylococcus aureus (strain Mu50 / ATCC 700699).